Here is a 3411-residue protein sequence, read N- to C-terminus: Genome polyprotein (3411 aa).

Residues 1–104 (MSGRKAQGKT…LSSRKRRSHD (104 aa)) are Cytoplasmic-facing. The interval 38–72 (PGPSRGVQGFIFFFLFNILTGKKITAHLKRLWKML) is hydrophobic; homodimerization of capsid protein C. The propeptide at 102 to 121 (SHDVLTVQFLILGMLLMTGG) is ER anchor for the capsid protein C, removed in mature form by serine protease NS3. The helical transmembrane segment at 105–125 (VLTVQFLILGMLLMTGGVTLV) threads the bilayer. The Extracellular segment spans residues 126–244 (RKNRWLLLNV…GERQLQKIER (119 aa)). Asn134 and Asn150 each carry an N-linked (GlcNAc...) asparagine; by host glycan. Residues 245–265 (WFVRNPFFAVTALTIAYLVGS) traverse the membrane as a helical segment. Topologically, residues 266–270 (NMTQR) are cytoplasmic. Residues 271–285 (VVIALLVLAVGPAYS) form a helical membrane-spanning segment. Topologically, residues 286-730 (AHCIGITDRD…TVFGSAFQGL (445 aa)) are extracellular. Intrachain disulfides connect Cys288–Cys315, Cys345–Cys401, Cys345–Cys406, Cys359–Cys390, Cys377–Cys401, Cys377–Cys406, Cys467–Cys568, and Cys585–Cys615. Residues 383–396 (DRGWGNGCGLFGKG) form a fusion peptide region. A helical membrane pass occupies residues 731-751 (FGGLNWITKVIIGAVLIWVGI). Over 752-757 (NTRNMT) the chain is Extracellular. The chain crosses the membrane as a helical span at residues 758–778 (MSMSMILVGVIMMFLSLGVGA). Residues 779–1132 (DQGCAINFAK…LVRSWVTAGE (354 aa)) are Extracellular-facing. Cystine bridges form between Cys782–Cys793, Cys833–Cys921, Cys957–Cys1002, Cys1058–Cys1107, Cys1069–Cys1091, and Cys1090–Cys1094. Residues Asn908 and Asn986 are each glycosylated (N-linked (GlcNAc...) asparagine; by host). The chain crosses the membrane as a helical span at residues 1133–1153 (IHAVPFGLVSMMIALEVVLRK). Topologically, residues 1154 to 1201 (RQGPKQMLVGGVVLLGAMLVGQVTLLDLLKLTVAVGLHFHEMNNGGDA) are cytoplasmic. Residues 1202-1222 (MYMALIAAFSVRPGLLIGFGL) form a helical membrane-spanning segment. The Lumenal segment spans residues 1223-1287 (RTLWSPRERL…ILPLMALLTP (65 aa)). A helical membrane pass occupies residues 1288–1308 (VTMAEVRLATMLFCTVVIIGV). Topologically, residues 1309 to 1355 (LYQNSKDTSMQKTIPLVALTLTSYLGLTQPFLGLCAFLATRIFGRRS) are cytoplasmic. A helical membrane pass occupies residues 1356 to 1376 (IPVNEALAAAGLVGVLAGLAF). The Lumenal portion of the chain corresponds to 1377–1378 (QE). The chain crosses the membrane as a helical span at residues 1379–1399 (MENFLGPIAVGGILMMLVSVA). Topologically, residues 1400–1456 (GRVDGLELKKLGEVAWEEEAEISGSSARYDVALSEQGEFKLLSEEKVPWDQVVMTSL) are cytoplasmic. The segment at 1407–1446 (LKKLGEVAWEEEAEISGSSARYDVALSEQGEFKLLSEEKV) is interacts with and activates NS3 protease. The helical intramembrane region spans 1457–1477 (ALVGAAIHPFALLLVLAGWLF). The Cytoplasmic portion of the chain corresponds to 1478–2157 (HVRGARRSGD…RNALSMMPEA (680 aa)). Residues 1485–1665 (SGDVLWDIPT…EVKEEGKEEL (181 aa)) enclose the Peptidase S7 domain. Active-site charge relay system; for serine protease NS3 activity residues include His1537, Asp1561, and Ser1622. A Helicase ATP-binding domain is found at 1669–1825 (PTMLKKGKTT…HSNGEIEDVQ (157 aa)). Positions 1673 to 1676 (KKGK) are important for RNA-binding. ATP is bound at residue 1682–1689 (FHPGAGKT). Positions 1773–1776 (DEAH) match the DEAH box motif. Positions 1820 to 1997 (EIEDVQTDIP…VRGGMVAPLY (178 aa)) constitute a Helicase C-terminal domain. Lys1877 is modified (N6-acetyllysine; by host). The interval 1942 to 1961 (AAQRRGRIGRNPNRDGDSYY) is disordered. A helical transmembrane segment spans residues 2158–2178 (MTIVMLFILAGLLTSGMVIFF). Topologically, residues 2179–2186 (MSPKGISR) are lumenal. The segment at residues 2187–2207 (MSMAMGTMAGCGYLMFLGGVK) is an intramembrane region (helical). Over 2208-2209 (PT) the chain is Lumenal. Residues 2210–2230 (HISYIMLIFFVLMVVVIPEPG) traverse the membrane as a helical segment. At 2231–2241 (QQRSIQDNQVA) the chain is on the cytoplasmic side. A helical membrane pass occupies residues 2242–2262 (FLIIGILTLVSVVAANELGML). At 2263–2293 (EKTKEDLFGKKNSIPSSASPWSWPDLDLKPG) the chain is on the lumenal side. Positions 2294 to 2314 (AAWTVYVGIVTMLSPMLHHWI) form an intramembrane region, helical. Over 2315-2360 (KVEYGNLSLSGIAQSASVLSFMDKGIPFMKMNISVIMLLISGWNSI) the chain is Lumenal. The chain crosses the membrane as a helical span at residues 2361 to 2380 (TVMPLLCGIGCAMLHWSLIL). Over 2381-2421 (PGIKAQQSKLAQRRVFHGVAKNPVVDGNPTVDIEEAPEMPV) the chain is Cytoplasmic. A helical transmembrane segment spans residues 2422 to 2442 (LYEKKLALYLLLALSLASVAM). Topologically, residues 2443–2445 (CRT) are lumenal. The chain crosses the membrane as a helical span at residues 2446–2466 (PFSLAEGIVLASAALGPLIEG). Residues 2467–3411 (NTSLLWNGPM…DADLQPGELI (945 aa)) lie on the Cytoplasmic side of the membrane. Residues 2507-2771 (GTANGKTLGE…DVTLPIGTRS (265 aa)) form the mRNA cap 0-1 NS5-type MT domain. Ser2562 contacts S-adenosyl-L-methionine. Ser2562 carries the phosphoserine modification. Lys2567 acts as the For 2'-O-MTase activity in catalysis. S-adenosyl-L-methionine contacts are provided by Gly2592, Trp2593, Thr2610, Leu2611, Asp2637, and Ile2638. The active-site For 2'-O-MTase activity is Asp2652. Ile2653 serves as a coordination point for S-adenosyl-L-methionine. Catalysis depends on for 2'-O-MTase activity residues Lys2688 and Glu2724. Position 2726 (Tyr2726) interacts with S-adenosyl-L-methionine. The Nuclear localization signal signature appears at 2878–2911 (RKIMKVVNRWLFRHLAREKNPRLCTKEEFIAKVR). Zn(2+) is bound by residues Glu2945, His2949, Cys2954, and Cys2957. The region spanning 3035 to 3187 (GGFYADDTAG…RPIDDRFGLA (153 aa)) is the RdRp catalytic domain. Zn(2+) is bound by residues His3222, Cys3238, and Cys3357.

It in the N-terminal section; belongs to the class I-like SAM-binding methyltransferase superfamily. mRNA cap 0-1 NS5-type methyltransferase family. In terms of assembly, homodimer. Interacts (via N-terminus) with host EXOC1 (via C-terminus); this interaction results in EXOC1 degradation through the proteasome degradation pathway. Forms heterodimers with envelope protein E in the endoplasmic reticulum and Golgi. As to quaternary structure, homodimer; in the endoplasmic reticulum and Golgi. Interacts with protein prM. Interacts with non-structural protein 1. In terms of assembly, homodimer; Homohexamer when secreted. Interacts with envelope protein E. Interacts (via N-terminus) with serine protease NS3. As to quaternary structure, forms a heterodimer with serine protease NS3. May form homooligomers. In terms of assembly, forms a heterodimer with NS2B. Interacts with non-structural protein 2A (via N-terminus). Interacts with NS4B. Interacts with unphosphorylated RNA-directed RNA polymerase NS5; this interaction stimulates RNA-directed RNA polymerase NS5 guanylyltransferase activity. NS3 interacts with host PDCD6IP; this interaction contributes to virion release. Interacts with serine protease NS3. As to quaternary structure, homodimer. Interacts with host STAT2; this interaction prevents the establishment of cellular antiviral state. Interacts with serine protease NS3. Interacts with host TRIM23; this interaction leads to NS5 ubiquitination. In terms of processing, specific enzymatic cleavages in vivo yield mature proteins. The nascent capsid protein C contains a C-terminal hydrophobic domain that act as a signal sequence for translocation of prM into the lumen of the ER. Mature capsid protein C is cleaved at a site upstream of this hydrophobic domain by NS3. prM is cleaved in post-Golgi vesicles by a host furin, releasing the mature small envelope protein M, and peptide pr. Non-structural protein 2A-alpha, a C-terminally truncated form of non-structural protein 2A, results from partial cleavage by NS3. Specific enzymatic cleavages in vivo yield mature proteins peptide 2K acts as a signal sequence and is removed from the N-terminus of NS4B by the host signal peptidase in the ER lumen. Signal cleavage at the 2K-4B site requires a prior NS3 protease-mediated cleavage at the 4A-2K site. Cleaved in post-Golgi vesicles by a host furin, releasing the mature small envelope protein M, and peptide pr. This cleavage is incomplete as up to 30% of viral particles still carry uncleaved prM. Post-translationally, N-glycosylated. In terms of processing, N-glycosylated. The excreted form is glycosylated and this is required for efficient secretion of the protein from infected cells. Polyubiquitinated; ubiquitination is probably mediated by host TRIM23 and is prerequisite for NS5-STAT2 interaction. NS5 is not ISGylated or sumoylated. Post-translationally, phosphorylated on serines residues. This phosphorylation may trigger NS5 nuclear localization. In terms of processing, acetylated by host KAT5. Acetylation modulates NS3 RNA-binding and -unwinding activities and plays an important role for viral replication.

Its subcellular location is the virion. It is found in the host nucleus. The protein localises to the host cytoplasm. The protein resides in the host perinuclear region. It localises to the secreted. Its subcellular location is the virion membrane. It is found in the host endoplasmic reticulum membrane. The catalysed reaction is Selective hydrolysis of -Xaa-Xaa-|-Yaa- bonds in which each of the Xaa can be either Arg or Lys and Yaa can be either Ser or Ala.. It carries out the reaction RNA(n) + a ribonucleoside 5'-triphosphate = RNA(n+1) + diphosphate. The enzyme catalyses a ribonucleoside 5'-triphosphate + H2O = a ribonucleoside 5'-diphosphate + phosphate + H(+). It catalyses the reaction ATP + H2O = ADP + phosphate + H(+). The catalysed reaction is a 5'-end (5'-triphosphoguanosine)-ribonucleoside in mRNA + S-adenosyl-L-methionine = a 5'-end (N(7)-methyl 5'-triphosphoguanosine)-ribonucleoside in mRNA + S-adenosyl-L-homocysteine. It carries out the reaction a 5'-end (N(7)-methyl 5'-triphosphoguanosine)-ribonucleoside in mRNA + S-adenosyl-L-methionine = a 5'-end (N(7)-methyl 5'-triphosphoguanosine)-(2'-O-methyl-ribonucleoside) in mRNA + S-adenosyl-L-homocysteine + H(+). Plays a role in virus budding by binding to the cell membrane and gathering the viral RNA into a nucleocapsid that forms the core of a mature virus particle. During virus entry, may induce genome penetration into the host cytoplasm after hemifusion induced by the surface proteins. Can migrate to the cell nucleus where it modulates host functions. Its function is as follows. Inhibits RNA silencing by interfering with host Dicer. In terms of biological role, prevents premature fusion activity of envelope proteins in trans-Golgi by binding to envelope protein E at pH6.0. After virion release in extracellular space, gets dissociated from E dimers. Functionally, acts as a chaperone for envelope protein E during intracellular virion assembly by masking and inactivating envelope protein E fusion peptide. prM is the only viral peptide matured by host furin in the trans-Golgi network probably to avoid catastrophic activation of the viral fusion activity in acidic Golgi compartment prior to virion release. prM-E cleavage is inefficient, and many virions are only partially matured. These uncleaved prM would play a role in immune evasion. May play a role in virus budding. Exerts cytotoxic effects by activating a mitochondrial apoptotic pathway through M ectodomain. May display a viroporin activity. Its function is as follows. Binds to host cell surface receptor and mediates fusion between viral and cellular membranes. Envelope protein is synthesized in the endoplasmic reticulum in the form of heterodimer with protein prM. They play a role in virion budding in the ER, and the newly formed immature particle is covered with 60 spikes composed of heterodimer between precursor prM and envelope protein E. The virion is transported to the Golgi apparatus where the low pH causes dissociation of PrM-E heterodimers and formation of E homodimers. prM-E cleavage is inefficient, and many virions are only partially matured. These uncleaved prM would play a role in immune evasion. In terms of biological role, involved in immune evasion, pathogenesis and viral replication. Once cleaved off the polyprotein, is targeted to three destinations: the viral replication cycle, the plasma membrane and the extracellular compartment. Essential for viral replication. Required for formation of the replication complex and recruitment of other non-structural proteins to the ER-derived membrane structures. Excreted as a hexameric lipoparticle that plays a role against host immune response. Antagonizing the complement function. Binds to the host macrophages and dendritic cells. Inhibits signal transduction originating from Toll-like receptor 3 (TLR3). Functionally, component of the viral RNA replication complex that functions in virion assembly and antagonizes the host immune response. Required cofactor for the serine protease function of NS3. May have membrane-destabilizing activity and form viroporins. Its function is as follows. Displays three enzymatic activities: serine protease, NTPase and RNA helicase. NS3 serine protease, in association with NS2B, performs its autocleavage and cleaves the polyprotein at dibasic sites in the cytoplasm: C-prM, NS2A-NS2B, NS2B-NS3, NS3-NS4A, NS4A-2K and NS4B-NS5. NS3 RNA helicase binds RNA and unwinds dsRNA in the 3' to 5' direction. Also plays a role in virus assembly. In terms of biological role, regulates the ATPase activity of the NS3 helicase activity. NS4A allows NS3 helicase to conserve energy during unwinding. Functionally, functions as a signal peptide for NS4B and is required for the interferon antagonism activity of the latter. Induces the formation of ER-derived membrane vesicles where the viral replication takes place. Inhibits interferon (IFN)-induced host STAT1 phosphorylation and nuclear translocation, thereby preventing the establishment of cellular antiviral state by blocking the IFN-alpha/beta pathway. Its function is as follows. Replicates the viral (+) and (-) RNA genome, and performs the capping of genomes in the cytoplasm. NS5 methylates viral RNA cap at guanine N-7 and ribose 2'-O positions. Besides its role in RNA genome replication, also prevents the establishment of cellular antiviral state by blocking the interferon-alpha/beta (IFN-alpha/beta) signaling pathway. IFN-I induces binding of NS5 to host IFN-activated transcription factor STAT2, preventing its transcriptional activity. Host TRIM23 is the E3 ligase that interacts with and polyubiquitinates NS5 to promote its binding to STAT2 and trigger IFN-I signaling inhibition. The sequence is that of Genome polyprotein from Yellow fever virus (strain French neurotropic vaccine FNV) (YFV).